We begin with the raw amino-acid sequence, 236 residues long: UPF0257 lipoprotein YnfC (236 aa).

A signal peptide spans 1 to 16; the sequence is MKKPLLLTLLCMILAG. Residue C17 is the site of N-palmitoyl cysteine attachment. Residue C17 is the site of S-diacylglycerol cysteine attachment.

It belongs to the UPF0257 family.

Its subcellular location is the cell membrane. The chain is UPF0257 lipoprotein YnfC from Salmonella dublin (strain CT_02021853).